Consider the following 862-residue polypeptide: Probable disease resistance protein At5g43740 (862 aa).

A coiled-coil region spans residues 24–61 (RNYIHMMESNLDALQKTMEELKNGRDDLLGRVSIEEDK). The region spanning 135–438 (MVAQEIIHKV…CEGFINPNRY (304 aa)) is the NB-ARC domain. 178-185 (GMGGVGKT) contacts ATP. 4 LRR repeats span residues 511-532 (IVRTMSFTCTQIKKISCRSKCP), 533-555 (NLSTLLILDNRLLVKISNRFFRF), 558-580 (KLVVLDLSANLDLIKLPEEISNL), and 582-604 (SLQYLNISLTGIKSLPVGLKKLR).

The protein belongs to the disease resistance NB-LRR family.

In terms of biological role, probable disease resistance protein. This Arabidopsis thaliana (Mouse-ear cress) protein is Probable disease resistance protein At5g43740.